Here is a 344-residue protein sequence, read N- to C-terminus: Uroporphyrinogen decarboxylase (344 aa).

Substrate contacts are provided by residues 23-27 (RQAGR), D73, Y149, T204, and H321.

The protein belongs to the uroporphyrinogen decarboxylase family. Homodimer.

Its subcellular location is the cytoplasm. It catalyses the reaction uroporphyrinogen III + 4 H(+) = coproporphyrinogen III + 4 CO2. The protein operates within porphyrin-containing compound metabolism; protoporphyrin-IX biosynthesis; coproporphyrinogen-III from 5-aminolevulinate: step 4/4. In terms of biological role, catalyzes the decarboxylation of four acetate groups of uroporphyrinogen-III to yield coproporphyrinogen-III. In Francisella tularensis subsp. holarctica (strain LVS), this protein is Uroporphyrinogen decarboxylase.